Here is a 590-residue protein sequence, read N- to C-terminus: V-type ATP synthase alpha chain (590 aa).

Position 234-241 (234-241 (GGFGAGKT)) interacts with ATP.

It belongs to the ATPase alpha/beta chains family.

The enzyme catalyses ATP + H2O + 4 H(+)(in) = ADP + phosphate + 5 H(+)(out). Produces ATP from ADP in the presence of a proton gradient across the membrane. The V-type alpha chain is a catalytic subunit. In Halothermothrix orenii (strain H 168 / OCM 544 / DSM 9562), this protein is V-type ATP synthase alpha chain.